We begin with the raw amino-acid sequence, 141 residues long: Nucleoside triphosphatase NudI (141 aa).

A Nudix hydrolase domain is found at 1-141; the sequence is MRQRTIVCPL…RKTLRLKGLL (141 aa). Positions 38-59 match the Nudix box motif; the sequence is GGVESGERIEEALRREIREELG.

Belongs to the Nudix hydrolase family. NudI subfamily. As to quaternary structure, monomer. Mg(2+) is required as a cofactor.

It catalyses the reaction a ribonucleoside 5'-triphosphate + H2O = a ribonucleoside 5'-phosphate + diphosphate + H(+). The enzyme catalyses a 2'-deoxyribonucleoside 5'-triphosphate + H2O = a 2'-deoxyribonucleoside 5'-phosphate + diphosphate + H(+). The catalysed reaction is dUTP + H2O = dUMP + diphosphate + H(+). It carries out the reaction dTTP + H2O = dTMP + diphosphate + H(+). It catalyses the reaction dCTP + H2O = dCMP + diphosphate + H(+). Functionally, catalyzes the hydrolysis of nucleoside triphosphates, with a preference for pyrimidine deoxynucleoside triphosphates (dUTP, dTTP and dCTP). The chain is Nucleoside triphosphatase NudI from Shigella flexneri serotype 5b (strain 8401).